Here is a 63-residue protein sequence, read N- to C-terminus: Large ribosomal subunit protein uL29 (63 aa).

This sequence belongs to the universal ribosomal protein uL29 family.

This Buchnera aphidicola subsp. Acyrthosiphon kondoi (Acyrthosiphon kondoi symbiotic bacterium) protein is Large ribosomal subunit protein uL29 (rpmC).